The chain runs to 409 residues: Elongation factor Tu, chloroplastic (409 aa).

Residues 10-214 (KPHINIGTIG…QVDSYIPTPT (205 aa)) form the tr-type G domain. The interval 19-26 (GHVDHGKT) is G1. 19 to 26 (GHVDHGKT) serves as a coordination point for GTP. T26 is a Mg(2+) binding site. K57 is subject to N6-methyllysine. The G2 stretch occupies residues 60–64 (GITIN). Positions 81–84 (DCPG) are G3. GTP contacts are provided by residues 81–85 (DCPGH) and 136–139 (NKED). Residues 136–139 (NKED) form a G4 region. The G5 stretch occupies residues 174-176 (SAL).

The protein belongs to the TRAFAC class translation factor GTPase superfamily. Classic translation factor GTPase family. EF-Tu/EF-1A subfamily.

It is found in the plastid. It localises to the chloroplast. The enzyme catalyses GTP + H2O = GDP + phosphate + H(+). Functionally, GTP hydrolase that promotes the GTP-dependent binding of aminoacyl-tRNA to the A-site of ribosomes during protein biosynthesis. This chain is Elongation factor Tu, chloroplastic (tufA), found in Euglena gracilis.